The sequence spans 141 residues: Nucleoside diphosphate kinase (141 aa).

ATP-binding residues include K11, F59, R87, T93, R104, and N114. The active-site Pros-phosphohistidine intermediate is the H117.

It belongs to the NDK family. Homotetramer. Mg(2+) is required as a cofactor.

It is found in the cytoplasm. It catalyses the reaction a 2'-deoxyribonucleoside 5'-diphosphate + ATP = a 2'-deoxyribonucleoside 5'-triphosphate + ADP. The enzyme catalyses a ribonucleoside 5'-diphosphate + ATP = a ribonucleoside 5'-triphosphate + ADP. Functionally, major role in the synthesis of nucleoside triphosphates other than ATP. The ATP gamma phosphate is transferred to the NDP beta phosphate via a ping-pong mechanism, using a phosphorylated active-site intermediate. In Ralstonia pickettii (strain 12J), this protein is Nucleoside diphosphate kinase.